The primary structure comprises 314 residues: UDP-N-acetylenolpyruvoylglucosamine reductase (314 aa).

Residues 27-192 form the FAD-binding PCMH-type domain; sequence KIGGKARYIV…LRAVFCLKFA (166 aa). Residue arginine 171 is part of the active site. The active-site Proton donor is the serine 223. Residue glutamate 293 is part of the active site.

It belongs to the MurB family. It depends on FAD as a cofactor.

The protein resides in the cytoplasm. It carries out the reaction UDP-N-acetyl-alpha-D-muramate + NADP(+) = UDP-N-acetyl-3-O-(1-carboxyvinyl)-alpha-D-glucosamine + NADPH + H(+). It functions in the pathway cell wall biogenesis; peptidoglycan biosynthesis. Functionally, cell wall formation. The protein is UDP-N-acetylenolpyruvoylglucosamine reductase of Caldicellulosiruptor bescii (strain ATCC BAA-1888 / DSM 6725 / KCTC 15123 / Z-1320) (Anaerocellum thermophilum).